Consider the following 207-residue polypeptide: Small ribosomal subunit protein uS4 (207 aa).

The tract at residues 30 to 51 (DKSKFDSKPGQHGRTSGARTSD) is disordered. Residues 97 to 157 (SRLDNVVYRM…EKSKKQGRIA (61 aa)) enclose the S4 RNA-binding domain.

It belongs to the universal ribosomal protein uS4 family. As to quaternary structure, part of the 30S ribosomal subunit. Contacts protein S5. The interaction surface between S4 and S5 is involved in control of translational fidelity.

One of the primary rRNA binding proteins, it binds directly to 16S rRNA where it nucleates assembly of the body of the 30S subunit. Functionally, with S5 and S12 plays an important role in translational accuracy. The polypeptide is Small ribosomal subunit protein uS4 (Verminephrobacter eiseniae (strain EF01-2)).